The chain runs to 223 residues: RNA-free ribonuclease P (223 aa).

This sequence belongs to the HARP family.

It catalyses the reaction Endonucleolytic cleavage of RNA, removing 5'-extranucleotides from tRNA precursor.. In terms of biological role, RNA-free RNase P that catalyzes the removal of the 5'-leader sequence from pre-tRNA to produce the mature 5'-terminus. The protein is RNA-free ribonuclease P of Methanococcus maripaludis (strain C5 / ATCC BAA-1333).